The chain runs to 463 residues: L-seryl-tRNA(Sec) selenium transferase (463 aa).

Position 295 is an N6-(pyridoxal phosphate)lysine (K295).

It belongs to the SelA family. As to quaternary structure, homodecamer; pentamer of dimers. Binds only one seryl-tRNA(Sec) per dimer. Pyridoxal 5'-phosphate is required as a cofactor.

The protein localises to the cytoplasm. It catalyses the reaction L-seryl-tRNA(Sec) + selenophosphate + H(+) = L-selenocysteinyl-tRNA(Sec) + phosphate. It functions in the pathway aminoacyl-tRNA biosynthesis; selenocysteinyl-tRNA(Sec) biosynthesis; selenocysteinyl-tRNA(Sec) from L-seryl-tRNA(Sec) (bacterial route): step 1/1. In terms of biological role, converts seryl-tRNA(Sec) to selenocysteinyl-tRNA(Sec) required for selenoprotein biosynthesis. This Escherichia fergusonii (strain ATCC 35469 / DSM 13698 / CCUG 18766 / IAM 14443 / JCM 21226 / LMG 7866 / NBRC 102419 / NCTC 12128 / CDC 0568-73) protein is L-seryl-tRNA(Sec) selenium transferase.